Reading from the N-terminus, the 568-residue chain is Potassium-transporting ATPase potassium-binding subunit (568 aa).

10 helical membrane-spanning segments follow: residues 3–23 (TEILGVAVQIVLMVVLAYPLG), 64–84 (FLKALLILNAFWFVWGMVLLV), 133–153 (FVIMLFQFITAATGMAAMAGV), 179–199 (ILLPLSLVVGFILILQGTPMG), 255–275 (MVECWSILIIPMAMVLALGFY), 281–301 (LGYSIFGVMLFAYLAGVFINV), 375–395 (FGGVGVGWLNYYTFIIMAVFI), 418–438 (IATFVALLHPFVILVFTAISS), 497–517 (IVLILSRFIPIVGQVAIAGLL), and 535–555 (VTFAVMTFAVIFIVAALSFFP).

Belongs to the KdpA family. The system is composed of three essential subunits: KdpA, KdpB and KdpC.

The protein resides in the cell inner membrane. Its function is as follows. Part of the high-affinity ATP-driven potassium transport (or Kdp) system, which catalyzes the hydrolysis of ATP coupled with the electrogenic transport of potassium into the cytoplasm. This subunit binds the periplasmic potassium ions and delivers the ions to the membrane domain of KdpB through an intramembrane tunnel. This is Potassium-transporting ATPase potassium-binding subunit from Bacteroides fragilis (strain ATCC 25285 / DSM 2151 / CCUG 4856 / JCM 11019 / LMG 10263 / NCTC 9343 / Onslow / VPI 2553 / EN-2).